A 671-amino-acid chain; its full sequence is Receptor-interacting serine/threonine-protein kinase 1 (671 aa).

S6 is modified (phosphoserine; by IKKA and IKKB). In terms of domain architecture, Protein kinase spans 17-289 (FLESAELDSG…GIEEKFRPFY (273 aa)). Phosphoserine; by autocatalysis is present on S20. ATP-binding positions include 23–31 (LDSGGFGKV) and K45. S25 carries the post-translational modification Phosphoserine; by IKKA and IKKB. D138 acts as the Proton acceptor in catalysis. Position 161 is a phosphoserine; by RIPK3 and autocatalysis (S161). S166 is subject to Phosphoserine; by autocatalysis. An interaction with SQSTM1 region spans residues 290–582 (LSQLEESVEE…QAIFDNTTSL (293 aa)). The residue at position 303 (S303) is a Phosphoserine. S320, S331, and S333 each carry phosphoserine; by MAP3K7. A compositionally biased stretch (polar residues) spans 331–348 (SRSNSATEQPGSLHSSQG). Residues 331-354 (SRSNSATEQPGSLHSSQGLGMGPV) are disordered. K377 is covalently cross-linked (Glycyl lysine isopeptide (Lys-Gly) (interchain with G-Cter in ubiquitin)). Y384 carries the phosphotyrosine modification. The tract at residues 389–455 (SRMDRQTKQQ…GNAVHQPSGL (67 aa)) is disordered. A compositionally biased stretch (polar residues) spans 428 to 444 (NFQNTEGKGTAYSSAAS). Positions 531–547 (YTIYNSTGIQIGAYNYM) match the RIP homotypic interaction motif (RHIM) motif. The 87-residue stretch at 583-669 (TDKHLDPIRE…DLLSSLIYVS (87 aa)) folds into the Death domain. (Microbial infection) N-beta-linked (GlcNAc) arginine glycosylation is present at R603.

This sequence belongs to the protein kinase superfamily. TKL Ser/Thr protein kinase family. In terms of assembly, homodimer. Interacts (via RIP homotypic interaction motif) with RIPK3 (via RIP homotypic interaction motif); this interaction induces RIPK1 phosphorylation and formation of a RIPK1-RIPK3 necroptosis-inducing complex. Upon TNF-induced necrosis, the RIPK1-RIPK3 dimer further interacts with PGAM5 and MLKL; the formation of this complex leads to PGAM5 phosphorylation and increase in PGAM5 phosphatase activity. Interacts (via the death domain) with TNFRSF6 (via the death domain) and TRADD (via the death domain). Is recruited by TRADD to TNFRSF1A in a TNF-dependent process. Binds RNF216, EGFR, IKBKG, TRAF1, TRAF2 and TRAF3. Interacts with BNLF1. Interacts with SQSTM1 upon TNF-alpha stimulation. May interact with MAVS/IPS1. Interacts with ZFAND5. Interacts with RBCK1. Interacts with ZBP1. Interacts with BIRC2/c-IAP1, BIRC3/c-IAP2 and XIAP/BIRC4. Interacts (via kinase domain) with DAB2IP (via Ras-GAP domain); the interaction occurs in a TNF-alpha-dependent manner. Interacts with ARHGEF2. Interacts (via protein kinase domain) with RFFL; involved in RIPK1 ubiquitination. Interacts with RNF34; involved in RIPK1 ubiquitination. Interacts with TICAM1 and this interaction is enhanced in the presence of WDFY1. Interacts with PELI1. Interacts (via death domain) with CRADD (via death domain); the interaction is direct. Component of complex IIa composed of at least RIPK1, FADD and CASP8. Component of the AIM2 PANoptosome complex, a multiprotein complex that drives inflammatory cell death (PANoptosis). Interacts with MAP3K7, CFLAR, CASP8, FADD and NEMO. Interacts with TAX1BP1; this interaction negatively regulates RIPK1 ubiquitination. Interacts with GRB2. Interacts with DDX24; this interaction disrupts RLR signaling activation of IFN-dependent transcription factor IRF7. As to quaternary structure, (Microbial infection) Interacts with mumps virus protein SH; this interaction inhibits downstream NF-kappa-B pathway activation. (Microbial infection) Interacts with Murid herpesvirus 1 protein RIR1. In terms of assembly, (Microbial infection) Interacts (via RIP homotypic interaction motif) with herpes simplex virus 1/HHV-1 protein RIR1/ICP6 (via RIP homotypic interaction motif); this interaction prevents necroptosis activation. As to quaternary structure, (Microbial infection) Interacts (via RIP homotypic interaction motif) with herpes simplex virus 2/HHV-2 protein RIR1/ICP10 (via RIP homotypic interaction motif); this interaction prevents necroptosis activation. Post-translationally, (Microbial infection) Proteolytically cleaved by S.flexneri OspD3 within the RIP homotypic interaction motif (RHIM), leading to its degradation and inhibition of necroptosis. In terms of processing, proteolytically cleaved by CASP8 at Asp-324. Cleavage is crucial for limiting TNF-induced apoptosis, necroptosis and inflammatory response. Cleavage abolishes NF-kappa-B activation and enhances the interaction of TRADD with FADD. Proteolytically cleaved by CASP6 during intrinsic apoptosis. RIPK1 and RIPK3 undergo reciprocal auto- and trans-phosphorylation. Phosphorylation of Ser-161 by RIPK3 is necessary for the formation of the necroptosis-inducing complex. Phosphorylation at Ser-25 represses its kinase activity and consequently prevents TNF-mediated RIPK1-dependent cell death. Phosphorylated at Ser-320 by MAP3K7 which requires prior ubiquitination with 'Lys-63'-linked chains by BIRC2/c-IAP1 and BIRC3/c-IAP2. This phosphorylation positively regulates RIPK1 interaction with RIPK3 to promote necroptosis but negatively regulates RIPK1 kinase activity and its interaction with FADD to mediate apoptosis. Post-translationally, deubiquitinated by USP7; this modification is required for TNF-alpha-induced apoptosis. In terms of processing, ubiquitinated with 'Lys-11'-, 'Lys-48'-, 'Lys-63'- and linear-linked type ubiquitin. Polyubiquitination with 'Lys-63'-linked chains by TRAF2 induces association with the IKK complex. Deubiquitination of 'Lys-63'-linked chains and polyubiquitination with 'Lys-48'-linked chains by TNFAIP3 leads to RIPK1 proteasomal degradation and consequently down-regulates TNF-alpha-induced NF-kappa-B signaling. 'Lys-48'-linked polyubiquitination by RFFL or RNF34 also promotes proteasomal degradation and negatively regulates TNF-alpha-induced NF-kappa-B signaling. Linear polyubiquitinated; the head-to-tail linear polyubiquitination ('Met-1'-linked) is mediated by the LUBAC complex and decreases protein kinase activity. Deubiquitination of linear polyubiquitin by CYLD promotes the kinase activity. Polyubiquitinated with 'Lys-48' and 'Lys-63'-linked chains by BIRC2/c-IAP1 and BIRC3/c-IAP2, leading to activation of NF-kappa-B. Ubiquitinated with 'Lys-63'-linked chains by PELI1. Ubiquitination at Lys-377 with 'Lys-63'-linked chains by BIRC2/c-IAP1 and BIRC3/c-IAP2 is essential for its phosphorylation at Ser-320 mediated by MAP3K7. This ubiquitination is required for NF-kB activation, suppresses RIPK1 kinase activity and plays a critical role in preventing cell death during embryonic development. (Microbial infection) Glycosylated at Arg-603 by enteropathogenic E.coli protein NleB1: arginine GlcNAcylation prevents homotypic/heterotypic death domain interactions.

It localises to the cytoplasm. The protein resides in the cell membrane. It carries out the reaction L-seryl-[protein] + ATP = O-phospho-L-seryl-[protein] + ADP + H(+). The catalysed reaction is L-threonyl-[protein] + ATP = O-phospho-L-threonyl-[protein] + ADP + H(+). Its activity is regulated as follows. Serine-threonine kinase activity is inhibited by linear polyubiquitination ('Met-1'-linked) by the LUBAC complex. Inhibited by necrostatins, including necrostatin-1, necrostatin-3 and necrostatin-4. Functionally, serine-threonine kinase which is a key regulator of TNF-mediated apoptosis, necroptosis and inflammatory pathways. Exhibits kinase activity-dependent functions that regulate cell death and kinase-independent scaffold functions regulating inflammatory signaling and cell survival. Has kinase-independent scaffold functions: upon binding of TNF to TNFR1, RIPK1 is recruited to the TNF-R1 signaling complex (TNF-RSC also known as complex I) where it acts as a scaffold protein promoting cell survival, in part, by activating the canonical NF-kappa-B pathway. Kinase activity is essential to regulate necroptosis and apoptosis, two parallel forms of cell death: upon activation of its protein kinase activity, regulates assembly of two death-inducing complexes, namely complex IIa (RIPK1-FADD-CASP8), which drives apoptosis, and the complex IIb (RIPK1-RIPK3-MLKL), which drives necroptosis. RIPK1 is required to limit CASP8-dependent TNFR1-induced apoptosis. In normal conditions, RIPK1 acts as an inhibitor of RIPK3-dependent necroptosis, a process mediated by RIPK3 component of complex IIb, which catalyzes phosphorylation of MLKL upon induction by ZBP1. Inhibits RIPK3-mediated necroptosis via FADD-mediated recruitment of CASP8, which cleaves RIPK1 and limits TNF-induced necroptosis. Required to inhibit apoptosis and necroptosis during embryonic development: acts by preventing the interaction of TRADD with FADD thereby limiting aberrant activation of CASP8. In addition to apoptosis and necroptosis, also involved in inflammatory response by promoting transcriptional production of pro-inflammatory cytokines, such as interleukin-6 (IL6). Phosphorylates RIPK3: RIPK1 and RIPK3 undergo reciprocal auto- and trans-phosphorylation. Phosphorylates DAB2IP at 'Ser-728' in a TNF-alpha-dependent manner, and thereby activates the MAP3K5-JNK apoptotic cascade. Required for ZBP1-induced NF-kappa-B activation in response to DNA damage. This Homo sapiens (Human) protein is Receptor-interacting serine/threonine-protein kinase 1.